Reading from the N-terminus, the 351-residue chain is Caveolin-2 (351 aa).

Positions 1-14 are enriched in polar residues; it reads MTRQNTSESDNTQR. 3 disordered regions span residues 1 to 55, 71 to 93, and 144 to 193; these read MTRQ…QGIA, HRTSLNQEVPTPQRRSHPQYDNL, and QKGS…PEME. The Cytoplasmic segment spans residues 1 to 261; that stretch reads MTRQNTSESD…FEIVRIYSYK (261 aa). Positions 22-31 are enriched in acidic residues; sequence TVDDIDELTD. Over residues 38 to 51 the composition is skewed to basic residues; it reads HHHHHHHHEHHHQH. The segment covering 167–184 has biased composition (low complexity); that stretch reads PAQQSAPPTQQSRPQTTS. Residues 262 to 290 constitute an intramembrane region (helical); that stretch reads ILTLIFGLIIAFLGGILFALFAFLNIWIF. Over 291–351 the chain is Cytoplasmic; the sequence is RPILILTRMA…EVWEKHIHHV (61 aa).

Belongs to the caveolin family. As to quaternary structure, homooligomer. In terms of tissue distribution, expressed in intracellular bodies in intestinal cells.

It is found in the golgi apparatus membrane. It localises to the cell membrane. The protein resides in the membrane. The protein localises to the caveola. Its subcellular location is the apical cell membrane. In terms of biological role, may act as a scaffolding protein within caveolar membranes. Interacts directly with G-protein alpha subunits and can regulate their activity. Thought to have a role in the uptake of lipids and proteins in the intestinal cells; operates in the apical uptake of lipid markers and trafficking of yolk proteins. Affects fecundity and egg laying. This chain is Caveolin-2 (cav-2), found in Caenorhabditis elegans.